The following is a 475-amino-acid chain: MMQYSLKFNQAKVLVLGDVMLDRYWFGATNRISPEAPVPVVKVKDMEERAGGAANVAMNIASLNATVALHGLVGHDDAGCVLDMLLKNHHIQNHCITLDSHPTITKLRILSRHQQLLRLDFEESFHNVESSPLLAKLQQQITGYGALILSDYGKGTLAAVQQMIQIARQAKVPVLIDPKGTDFERYRGATLLTPNMAEFEAVVGACLNDNDIVSKGLKLINDLELSALLVTRSEKGMTLLRPNHPPFHLPTQAKEVYDVTGAGDTVISILATAIADGRPYEEACYLANAAAGIVVGKLGTSTVNATELENAIHHREETGFGIVTEERLKQFTKEAKNRGEKIVMTNGCFDILHPGHVSYLENARKLGDRLIVAVNCDQSVKRLKGESRPINSLSARMAILAGLASVDWVIAFEEDTPQRLISEILPDVLVKGGDYKPEQIVGCQEVWANGGNVKALNFEDGCSTTDVIKKIQAIR.

Residues 1-318 form a ribokinase region; it reads MMQYSLKFNQ…ENAIHHREET (318 aa). ATP is bound at residue 195–198; it reads NMAE. The active site involves Asp264. Positions 344 to 475 are cytidylyltransferase; that stretch reads MTNGCFDILH…DVIKKIQAIR (132 aa).

In the N-terminal section; belongs to the carbohydrate kinase PfkB family. The protein in the C-terminal section; belongs to the cytidylyltransferase family. Homodimer.

It catalyses the reaction D-glycero-beta-D-manno-heptose 7-phosphate + ATP = D-glycero-beta-D-manno-heptose 1,7-bisphosphate + ADP + H(+). It carries out the reaction D-glycero-beta-D-manno-heptose 1-phosphate + ATP + H(+) = ADP-D-glycero-beta-D-manno-heptose + diphosphate. It participates in nucleotide-sugar biosynthesis; ADP-L-glycero-beta-D-manno-heptose biosynthesis; ADP-L-glycero-beta-D-manno-heptose from D-glycero-beta-D-manno-heptose 7-phosphate: step 1/4. Its pathway is nucleotide-sugar biosynthesis; ADP-L-glycero-beta-D-manno-heptose biosynthesis; ADP-L-glycero-beta-D-manno-heptose from D-glycero-beta-D-manno-heptose 7-phosphate: step 3/4. The protein operates within bacterial outer membrane biogenesis; LOS core biosynthesis. Its function is as follows. Catalyzes the phosphorylation of D-glycero-D-manno-heptose 7-phosphate at the C-1 position to selectively form D-glycero-beta-D-manno-heptose-1,7-bisphosphate. In terms of biological role, catalyzes the ADP transfer from ATP to D-glycero-beta-D-manno-heptose 1-phosphate, yielding ADP-D-glycero-beta-D-manno-heptose. This Haemophilus ducreyi (strain 35000HP / ATCC 700724) protein is Bifunctional protein HldE.